The chain runs to 593 residues: Translation initiation factor IF-2 (593 aa).

One can recognise a tr-type G domain in the interval 101-270; that stretch reads LRPPVVTIMG…LLIAELEDLR (170 aa). The interval 110 to 117 is G1; that stretch reads GHVDHGKT. 110–117 lines the GTP pocket; sequence GHVDHGKT. The G2 stretch occupies residues 135–139; it reads GITQH. Residues 156–159 form a G3 region; it reads DTPG. Residues 156 to 160 and 210 to 213 contribute to the GTP site; these read DTPGH and NKMD. The interval 210 to 213 is G4; the sequence is NKMD. Residues 246 to 248 are G5; the sequence is SAR.

This sequence belongs to the TRAFAC class translation factor GTPase superfamily. Classic translation factor GTPase family. IF-2 subfamily.

It is found in the cytoplasm. Functionally, one of the essential components for the initiation of protein synthesis. Protects formylmethionyl-tRNA from spontaneous hydrolysis and promotes its binding to the 30S ribosomal subunits. Also involved in the hydrolysis of GTP during the formation of the 70S ribosomal complex. This is Translation initiation factor IF-2 from Dehalococcoides mccartyi (strain CBDB1).